A 350-amino-acid chain; its full sequence is Thioredoxin-like fold domain-containing protein MRL7L, chloroplastic (350 aa).

Residues 1-48 (MILPFSTQFTCPVQDNGFSPSSLLSHCKRDRFEVTSLRYDSFGSVKTA) constitute a chloroplast transit peptide. 2 disordered regions span residues 78 to 107 (KKEE…LDDP) and 182 to 201 (NEKK…DSEK). Composition is skewed to acidic residues over residues 82–93 (DSDSEDEEDEVK) and 186–200 (EEED…DDSE).

It localises to the plastid. It is found in the chloroplast stroma. The protein localises to the nucleus. Its function is as follows. Plays an essential role in early steps of chloroplast development. Involved in the regulation of plastid gene expression. Required for the proper function of the plastid transcriptional machinery and protein accumulation in thylakoid membranes. May function as molecular chaperone to ensure proper organization of the nucleoids in chloroplasts. Is a necessary component of phytochrome signaling for photosynthesis-associated plastid-encoded genes (PhAPGs) activation. Mediates the degradation of two repressors of chloroplast biogenesis, PIF1 and PIF3 in nucleus. Promotes the assembly of the plastid-encoded RNA polymerase (PEP) complex for PhAPG transcription in plastids. The protein is Thioredoxin-like fold domain-containing protein MRL7L, chloroplastic of Arabidopsis thaliana (Mouse-ear cress).